Consider the following 194-residue polypeptide: MIKKLGGNLALFDREMDNFKGVTIKLTIFRDGKKLEQSVDLYDVNNNKIAKMINFGGAVFFESDDYFSNKSGIPLKALSVASVQAGSSFSSIPTFFNKDYKNVYRLQIFEMKDLALTNLDDLVKFLPVITKQKFITVRFRNYQPYYANFGYNELIASHNDMIADITLDSVDTKPYLLKYNTISHDWDMENIKLQ.

This is an uncharacterized protein from Rickettsia prowazekii (strain Madrid E).